A 363-amino-acid chain; its full sequence is Large ribosomal subunit protein uL4B (363 aa).

The interval 280-363 (PENIISNADV…EKFLSVLHEN (84 aa)) is C-terminal-extended nuclear localization signal.

Belongs to the universal ribosomal protein uL4 family. In terms of assembly, component of the large ribosomal subunit (LSU). Mature yeast ribosomes consist of a small (40S) and a large (60S) subunit. The 40S small subunit contains 1 molecule of ribosomal RNA (18S rRNA) and at least 33 different proteins. The large 60S subunit contains 3 rRNA molecules (25S, 5.8S and 5S rRNA) and at least 46 different proteins. uL4 is associated with the polypeptide exit tunnel. uL4 interacts with its chaperone ACL4 and the nuclear import receptor KAP104.

The protein resides in the cytoplasm. Functionally, component of the ribosome, a large ribonucleoprotein complex responsible for the synthesis of proteins in the cell. The small ribosomal subunit (SSU) binds messenger RNAs (mRNAs) and translates the encoded message by selecting cognate aminoacyl-transfer RNA (tRNA) molecules. The large subunit (LSU) contains the ribosomal catalytic site termed the peptidyl transferase center (PTC), which catalyzes the formation of peptide bonds, thereby polymerizing the amino acids delivered by tRNAs into a polypeptide chain. The nascent polypeptides leave the ribosome through a tunnel in the LSU and interact with protein factors that function in enzymatic processing, targeting, and the membrane insertion of nascent chains at the exit of the ribosomal tunnel. The protein is Large ribosomal subunit protein uL4B (rpl401) of Schizosaccharomyces pombe (strain 972 / ATCC 24843) (Fission yeast).